A 428-amino-acid chain; its full sequence is Probable mannosyltransferase YUR1 (428 aa).

The Cytoplasmic portion of the chain corresponds to 1–3 (MAK). Residues 4 to 24 (GGSLYIVGIFLPIWTFMIYIF) traverse the membrane as a helical; Signal-anchor for type II membrane protein segment. The segment at 25–88 (GKELFLIRKY…TRQNDSDSFH (64 aa)) is stem region. Topologically, residues 25 to 428 (GKELFLIRKY…YFLKEEQDEI (404 aa)) are lumenal. N77, N82, N92, and N167 each carry an N-linked (GlcNAc...) asparagine glycan. The segment at 89–428 (LRENATILML…YFLKEEQDEI (340 aa)) is catalytic. The active-site Nucleophile is the E313. An N-linked (GlcNAc...) asparagine glycan is attached at N414.

This sequence belongs to the glycosyltransferase 15 family.

The protein resides in the golgi apparatus membrane. It participates in protein modification; protein glycosylation. In terms of biological role, possible glycosyltransferase involved in N-linked glycosylation. Transfers an alpha-D-mannosyl residue from GDP-mannose into lipid-linked oligosaccharide, forming an alpha-(1-&gt;2)-D-mannosyl-D-mannose linkage. The sequence is that of Probable mannosyltransferase YUR1 (YUR1) from Saccharomyces cerevisiae (strain ATCC 204508 / S288c) (Baker's yeast).